A 761-amino-acid chain; its full sequence is Disintegrin and metalloproteinase domain-containing protein 24 (761 aa).

Positions 1–34 are cleaved as a signal peptide; that stretch reads MVAMSEALVHARITLLQAWLRMLLFSSVWPPTWC. A propeptide spanning residues 35 to 200 is cleaved from the precursor; it reads AEYKGPPETV…GKSTRMQSIY (166 aa). The Extracellular portion of the chain corresponds to 35 to 697; sequence AEYKGPPETV…SKKDAPEKPN (663 aa). Residue N140 is glycosylated (N-linked (GlcNAc...) asparagine). The Cysteine switch motif lies at 172–179; sequence MRCGLTDE. A Zn(2+)-binding site is contributed by C174. The 193-residue stretch at 208–400 folds into the Peptidase M12B domain; the sequence is LYIKLALVID…KSCIHREPRP (193 aa). N-linked (GlcNAc...) asparagine glycans are attached at residues N227 and N301. Disulfide bonds link C323-C393, C357-C379, C359-C364, C465-C485, C635-C646, C640-C652, and C654-C663. Position 342 (H342) interacts with Zn(2+). E343 is an active-site residue. Zn(2+) contacts are provided by H346 and H352. N378, N390, and N479 each carry an N-linked (GlcNAc...) asparagine glycan. The 88-residue stretch at 406 to 493 folds into the Disintegrin domain; the sequence is LKVCGNGIVE…ECPEDLFVQD (88 aa). In terms of domain architecture, EGF-like spans 631-664; that stretch reads WVNDCTPETCNMKGVCNNKQHCHCDVGWSPPNCQ. A helical membrane pass occupies residues 698–718; the sequence is VIIWLLPIICVAVVLSVLFCL. Over 719 to 761 the chain is Cytoplasmic; it reads SGATKKSREAAASQPAEERVKPPYEGAEPSYETVKPPDEWANP. Residues 725–761 are disordered; that stretch reads SREAAASQPAEERVKPPYEGAEPSYETVKPPDEWANP.

As to quaternary structure, monomer. Zn(2+) serves as cofactor. Post-translationally, the prodomain is removed during sperm passage through the caput epididymis after the protein has reached the cell surface. Not processed in the secretory pathway. As to expression, expressed exclusively in testis and more specifically on the surface of mature sperm (at protein level).

The protein resides in the membrane. Plasma membrane protease present on mature sperm that may be involved in sperm function during epididymal maturation and/or fertilization. The chain is Disintegrin and metalloproteinase domain-containing protein 24 from Mus musculus (Mouse).